Consider the following 122-residue polypeptide: MIYAQPLCYPRLSRLTHSYEALERRRRTFHCRNTCLFKNTLTVGTTISIKLICGLHYATQHTGSFTRHLLHCTSFAFAKLNVARCNYYTVHPSSPFLNFTFSLDFTHRTYKVTFINIEINYR.

This is an uncharacterized protein from Saccharomyces cerevisiae (strain ATCC 204508 / S288c) (Baker's yeast).